Here is an 839-residue protein sequence, read N- to C-terminus: Taste receptor type 1 member 2 (839 aa).

Positions 1–19 (MGPRATTICSLFFLLWVLA) are cleaved as a signal peptide. The Extracellular segment spans residues 20–566 (EPAENSDFYL…AFLEWHEAPT (547 aa)). Residues asparagine 84, asparagine 248, asparagine 292, asparagine 312, asparagine 368, asparagine 428, asparagine 487, and asparagine 527 are each glycosylated (N-linked (GlcNAc...) asparagine). Residues 567–587 (IAVALLAALGFLSTLAILVIF) traverse the membrane as a helical segment. Topologically, residues 588–602 (WRHFQTPMVRSAGGP) are cytoplasmic. The helical transmembrane segment at 603–623 (MCFLMLTLLLVAYMVVPVYVG) threads the bilayer. Residues 624 to 635 (PPKVSTCLCRQA) lie on the Extracellular side of the membrane. The helical transmembrane segment at 636 to 656 (LFPLCFTICISCIAVRSFQII) threads the bilayer. Residues 657–681 (CAFKMASRFPRAYSYWVRYQGPYVS) lie on the Cytoplasmic side of the membrane. A helical membrane pass occupies residues 682–702 (MAFITVLKMVIVVIGMLATGL). Over 703–727 (NPTTRTDPDDPKIMIVSCNPNYRNS) the chain is Extracellular. The chain crosses the membrane as a helical span at residues 728–748 (LLFNTSLDLLLSVVGFSFANM). At 749–760 (GKELPTNYNEAK) the chain is on the cytoplasmic side. A helical membrane pass occupies residues 761–781 (FITLSMTFYFTSSISLCTFMS). At 782–784 (AYS) the chain is on the extracellular side. Residues 785 to 805 (GVLVTIVDLLVTVLNLLAISL) form a helical membrane-spanning segment. The Cytoplasmic segment spans residues 806 to 839 (GYFGPKCYMILFYPERNTPAYFNSVIQGYTMTRD).

Belongs to the G-protein coupled receptor 3 family. TAS1R subfamily. Forms heterodimers with TAS1R3.

The protein resides in the cell membrane. Its function is as follows. Putative taste receptor. TAS1R2/TAS1R3 recognizes diverse natural and synthetic sweeteners. This chain is Taste receptor type 1 member 2 (TAS1R2), found in Pongo pygmaeus (Bornean orangutan).